Reading from the N-terminus, the 200-residue chain is 3-isopropylmalate dehydratase small subunit (200 aa).

The protein belongs to the LeuD family. LeuD type 1 subfamily. In terms of assembly, heterodimer of LeuC and LeuD.

It catalyses the reaction (2R,3S)-3-isopropylmalate = (2S)-2-isopropylmalate. It participates in amino-acid biosynthesis; L-leucine biosynthesis; L-leucine from 3-methyl-2-oxobutanoate: step 2/4. Catalyzes the isomerization between 2-isopropylmalate and 3-isopropylmalate, via the formation of 2-isopropylmaleate. The chain is 3-isopropylmalate dehydratase small subunit from Photobacterium profundum (strain SS9).